The primary structure comprises 396 residues: Stearoyl-[acyl-carrier-protein] 9-desaturase, chloroplastic (396 aa).

The N-terminal 33 residues, Met-1–Met-33, are a transit peptide targeting the chloroplast. Fe cation-binding residues include Glu-138, Glu-176, His-179, Glu-229, Glu-262, and His-265.

The protein belongs to the fatty acid desaturase type 2 family. In terms of assembly, homodimer. Requires Fe(2+) as cofactor.

It is found in the plastid. The protein resides in the chloroplast. The enzyme catalyses octadecanoyl-[ACP] + 2 reduced [2Fe-2S]-[ferredoxin] + O2 + 2 H(+) = (9Z)-octadecenoyl-[ACP] + 2 oxidized [2Fe-2S]-[ferredoxin] + 2 H2O. It participates in lipid metabolism; fatty acid metabolism. Its function is as follows. Converts stearoyl-ACP to oleoyl-ACP by introduction of a cis double bond between carbons 9 and 10 of the acyl chain. In Helianthus annuus (Common sunflower), this protein is Stearoyl-[acyl-carrier-protein] 9-desaturase, chloroplastic.